The sequence spans 147 residues: Small ribosomal subunit protein uS12 (147 aa).

The protein belongs to the universal ribosomal protein uS12 family. Part of the 30S ribosomal subunit.

Functionally, with S4 and S5 plays an important role in translational accuracy. Located at the interface of the 30S and 50S subunits. The polypeptide is Small ribosomal subunit protein uS12 (Hyperthermus butylicus (strain DSM 5456 / JCM 9403 / PLM1-5)).